Here is a 343-residue protein sequence, read N- to C-terminus: N-acetylornithine carbamoyltransferase (343 aa).

Residues 49–52, Trp77, and Arg112 contribute to the carbamoyl phosphate site; that span reads SMRT. Glu144 is a N(2)-acetyl-L-ornithine binding site. 148 to 151 serves as a coordination point for carbamoyl phosphate; the sequence is HPCQ. Positions 252 and 295 each coordinate N(2)-acetyl-L-ornithine. Residue 294-295 coordinates carbamoyl phosphate; that stretch reads CL. Lys302 carries the post-translational modification N6-carboxylysine. Arg322 is a binding site for carbamoyl phosphate.

This sequence belongs to the aspartate/ornithine carbamoyltransferase superfamily. AOTCase family. As to quaternary structure, homotrimer.

It localises to the cytoplasm. The enzyme catalyses N(2)-acetyl-L-ornithine + carbamoyl phosphate = N(2)-acetyl-L-citrulline + phosphate + H(+). It functions in the pathway amino-acid biosynthesis; L-arginine biosynthesis. Carboxylation at Lys-302 increases the catalytic activity of the enzyme. Its function is as follows. Catalyzes the transfer of the carbamoyl group from carbamoyl phosphate to the delta-amino group of N(2)-acetyl-L-ornithine to produce N(2)-acetyl-L-citrulline. This is a step in an alternative arginine biosynthesis pathway. The enzyme has no activity with ornithine. This chain is N-acetylornithine carbamoyltransferase, found in Xanthomonas axonopodis pv. citri (strain 306).